A 503-amino-acid polypeptide reads, in one-letter code: Aspartyl/glutamyl-tRNA(Asn/Gln) amidotransferase subunit B (503 aa).

Belongs to the GatB/GatE family. GatB subfamily. In terms of assembly, heterotrimer of A, B and C subunits.

The catalysed reaction is L-glutamyl-tRNA(Gln) + L-glutamine + ATP + H2O = L-glutaminyl-tRNA(Gln) + L-glutamate + ADP + phosphate + H(+). It carries out the reaction L-aspartyl-tRNA(Asn) + L-glutamine + ATP + H2O = L-asparaginyl-tRNA(Asn) + L-glutamate + ADP + phosphate + 2 H(+). Its function is as follows. Allows the formation of correctly charged Asn-tRNA(Asn) or Gln-tRNA(Gln) through the transamidation of misacylated Asp-tRNA(Asn) or Glu-tRNA(Gln) in organisms which lack either or both of asparaginyl-tRNA or glutaminyl-tRNA synthetases. The reaction takes place in the presence of glutamine and ATP through an activated phospho-Asp-tRNA(Asn) or phospho-Glu-tRNA(Gln). This chain is Aspartyl/glutamyl-tRNA(Asn/Gln) amidotransferase subunit B, found in Mycobacterium avium (strain 104).